We begin with the raw amino-acid sequence, 1827 residues long: Phenolphthiocerol/phthiocerol polyketide synthase subunit C (1827 aa).

In terms of domain architecture, Ketosynthase family 3 (KS3) spans 35 to 461; the sequence is CEPVAVVGIG…GTNAHVVVEQ (427 aa). Catalysis depends on for beta-ketoacyl synthase activity residues Cys-207, His-342, and His-383. The interval 566–876 is acyltransferase; that stretch reads VFVYSGQGSQ…LAAVGVAASE (311 aa). Ser-654 (for malonyltransferase activity) is an active-site residue. The interval 910–1037 is N-terminal hotdog fold; that stretch reads HPLLGAHIEM…AKVEQSPREC (128 aa). Residues 910-1076 form a dehydratase region; the sequence is HPLLGAHIEM…QHHGPAFAAL (167 aa). Residues 910–1198 form the PKS/mFAS DH domain; sequence HPLLGAHIEM…LRRVERRAVP (289 aa). Catalysis depends on His-942, which acts as the Proton acceptor; for dehydratase activity. A C-terminal hotdog fold region spans residues 1050 to 1198; the sequence is GTTVSPADFY…LRRVERRAVP (149 aa). Asp-1111 (proton donor; for dehydratase activity) is an active-site residue. Residues 1439 to 1617 form a beta-ketoacyl reductase region; the sequence is ASYVVTGGLG…VINWGPWSEV (179 aa). Residue 1440–1485 coordinates NADP(+); it reads SYVVTGGLGGLGLVVARWLVDRGAGRVVLGGRSDPTDEQCNVLAEL. The Carrier domain maps to 1706–1785; the sequence is RAVTERMCAR…DLTADLMRQL (80 aa). The residue at position 1745 (Ser-1745) is an O-(pantetheine 4'-phosphoryl)serine.

NADP(+) is required as a cofactor. Pantetheine 4'-phosphate serves as cofactor.

The catalysed reaction is icosanoyl-[(phenol)carboxyphthiodiolenone synthase] + 2 (S)-methylmalonyl-CoA + 3 malonyl-CoA + 5 NADPH + 10 H(+) = C32-carboxyphthiodiolenone-[(phenol)carboxyphthiodiolenone synthase] + 5 CO2 + 5 NADP(+) + 5 CoA + 2 H2O. It carries out the reaction docosanoyl-[(phenol)carboxyphthiodiolenone synthase] + 2 (S)-methylmalonyl-CoA + 3 malonyl-CoA + 5 NADPH + 10 H(+) = C34-carboxyphthiodiolenone-[(phenol)carboxyphthiodiolenone synthase] + 5 CO2 + 5 NADP(+) + 5 CoA + 2 H2O. It catalyses the reaction 17-(4-hydroxyphenyl)heptadecanoyl-[(phenol)carboxyphthiodiolenone synthase] + 2 (S)-methylmalonyl-CoA + 3 malonyl-CoA + 5 NADPH + 10 H(+) = C35-(phenol)carboxyphthiodiolenone-[(phenol)carboxyphthiodiolenone synthase] + 5 CO2 + 5 NADP(+) + 5 CoA + 2 H2O. The enzyme catalyses 19-(4-hydroxyphenyl)nonadecanoyl-[(phenol)carboxyphthiodiolenone synthase] + 2 (S)-methylmalonyl-CoA + 3 malonyl-CoA + 5 NADPH + 10 H(+) = C37-(phenol)carboxyphthiodiolenone-[(phenol)carboxyphthiodiolenone synthase] + 5 CO2 + 5 NADP(+) + 5 CoA + 2 H2O. The protein operates within lipid metabolism; fatty acid biosynthesis. Its function is as follows. Part of the PpsABCDE complex involved in the biosynthesis of the lipid core common to phthiocerols and phenolphthiocerols by successive additions of malonyl-CoA or methylmalonyl-CoA extender units. PpsA can accept as substrate the activated forms of either icosanoyl (C20), docosanoyl (C22) or lignoceroyl (C24) groups from FadD26, or a (4-hydroxyphenyl)-C17 or (4-hydroxyphenyl)-C19 fatty acyl from FadD29. PpsA initiates the biosynthesis and extends its substrate using a malonyl-CoA extender unit. The PpsB and PpsC proteins add the second and third malonyl-CoA extender units. PpsD adds an (R)-methylmalonyl unit and PpsE adds a second (R)-methylmalonyl unit. The incorporation of the methylmalonyl units results in formation of two branched methyl groups in the elongated product. This chain is Phenolphthiocerol/phthiocerol polyketide synthase subunit C (ppsD), found in Mycobacterium bovis (strain ATCC BAA-935 / AF2122/97).